A 262-amino-acid chain; its full sequence is Ribose-5-phosphate isomerase A (262 aa).

Substrate-binding positions include 33–36 (TGST), 89–92 (DGAD), and 102–105 (KGGG). The active-site Proton acceptor is the E111. K129 is a substrate binding site.

The protein belongs to the ribose 5-phosphate isomerase family. Homodimer.

It carries out the reaction aldehydo-D-ribose 5-phosphate = D-ribulose 5-phosphate. Its pathway is carbohydrate degradation; pentose phosphate pathway; D-ribose 5-phosphate from D-ribulose 5-phosphate (non-oxidative stage): step 1/1. Functionally, catalyzes the reversible conversion of ribose-5-phosphate to ribulose 5-phosphate. This is Ribose-5-phosphate isomerase A from Ruegeria sp. (strain TM1040) (Silicibacter sp.).